Consider the following 278-residue polypeptide: Shikimate dehydrogenase (NADP(+)) (278 aa).

Shikimate-binding positions include 14 to 16 and Thr-61; that span reads SKS. Residue Lys-65 is the Proton acceptor of the active site. Shikimate is bound by residues Asn-86 and Asp-102. Residues 127–131, 151–156, and Met-221 contribute to the NADP(+) site; these read GAGGA and NRTASK. Tyr-223 contributes to the shikimate binding site. Gly-245 serves as a coordination point for NADP(+).

This sequence belongs to the shikimate dehydrogenase family. Homodimer.

It carries out the reaction shikimate + NADP(+) = 3-dehydroshikimate + NADPH + H(+). It functions in the pathway metabolic intermediate biosynthesis; chorismate biosynthesis; chorismate from D-erythrose 4-phosphate and phosphoenolpyruvate: step 4/7. Its function is as follows. Involved in the biosynthesis of the chorismate, which leads to the biosynthesis of aromatic amino acids. Catalyzes the reversible NADPH linked reduction of 3-dehydroshikimate (DHSA) to yield shikimate (SA). In Saccharophagus degradans (strain 2-40 / ATCC 43961 / DSM 17024), this protein is Shikimate dehydrogenase (NADP(+)).